An 87-amino-acid chain; its full sequence is Cell division topological specificity factor (87 aa).

Belongs to the MinE family.

Functionally, prevents the cell division inhibition by proteins MinC and MinD at internal division sites while permitting inhibition at polar sites. This ensures cell division at the proper site by restricting the formation of a division septum at the midpoint of the long axis of the cell. The protein is Cell division topological specificity factor of Rhizobium meliloti (strain 1021) (Ensifer meliloti).